Consider the following 412-residue polypeptide: MSYIEKIDPELFEAIKNEADRQEHKLNLIASENYASRAVMEAQGSIMTNKYAEGYSGKRYYGGCDFVDVAENLAIARAKELFGAKYVNVQPHSGSGANMAVYFSVLQPGDTILSMDLSHGGHLSHGSPVSFSGKLYNIVPYGVSKETEALDYDELLKLAKECKPRMIVCGASAYPRVIDFKRFREIADEVGAYLLADIAHIAGLVVAGVHPSPVPYADFVTTTTHKTLRGPRGGMIISKTEELAIGVNKAVFPGIQGGPLMHIIAAKAVAFKEAMSEEFRQDQDQTVKNAKVLCSCLKQKGFDIVSGGTDNHLMLVNLNNMNITGKDAEAALSKAGIIANKNTVPFETRSPFVTSGVRLGTPSCTTRGMKEKEMELVADYIEAAIKNSENDALLSEINIKVRDLCLKFPVYE.

(6S)-5,6,7,8-tetrahydrofolate is bound by residues Leu117 and Gly121–Leu123. Lys226 is modified (N6-(pyridoxal phosphate)lysine). Residues Glu242 and Ser350–Phe352 contribute to the (6S)-5,6,7,8-tetrahydrofolate site.

The protein belongs to the SHMT family. In terms of assembly, homodimer. Pyridoxal 5'-phosphate is required as a cofactor.

It localises to the cytoplasm. It catalyses the reaction (6R)-5,10-methylene-5,6,7,8-tetrahydrofolate + glycine + H2O = (6S)-5,6,7,8-tetrahydrofolate + L-serine. The protein operates within one-carbon metabolism; tetrahydrofolate interconversion. It functions in the pathway amino-acid biosynthesis; glycine biosynthesis; glycine from L-serine: step 1/1. In terms of biological role, catalyzes the reversible interconversion of serine and glycine with tetrahydrofolate (THF) serving as the one-carbon carrier. Also exhibits THF-independent aldolase activity toward beta-hydroxyamino acids, producing glycine and aldehydes, via a retro-aldol mechanism. The protein is Serine hydroxymethyltransferase of Methanosarcina mazei (strain ATCC BAA-159 / DSM 3647 / Goe1 / Go1 / JCM 11833 / OCM 88) (Methanosarcina frisia).